The sequence spans 351 residues: Homoserine O-acetyltransferase (351 aa).

Residues valine 51 to glutamate 334 form the AB hydrolase-1 domain. Serine 146 functions as the Nucleophile in the catalytic mechanism. Residue arginine 212 participates in substrate binding. Catalysis depends on residues aspartate 299 and histidine 328. Aspartate 329 provides a ligand contact to substrate.

This sequence belongs to the AB hydrolase superfamily. MetX family. As to quaternary structure, homodimer.

The protein localises to the cytoplasm. It carries out the reaction L-homoserine + acetyl-CoA = O-acetyl-L-homoserine + CoA. Its pathway is amino-acid biosynthesis; L-methionine biosynthesis via de novo pathway; O-acetyl-L-homoserine from L-homoserine: step 1/1. Functionally, transfers an acetyl group from acetyl-CoA to L-homoserine, forming acetyl-L-homoserine. The sequence is that of Homoserine O-acetyltransferase from Cyclobacterium marinum (strain ATCC 25205 / DSM 745 / LMG 13164 / NCIMB 1802) (Flectobacillus marinus).